A 328-amino-acid polypeptide reads, in one-letter code: Biotin synthase (328 aa).

Residues 41–260 (TAIETASLLS…VALARILMPA (220 aa)) enclose the Radical SAM core domain. Positions 56, 60, and 63 each coordinate [4Fe-4S] cluster. Positions 100, 131, 191, and 264 each coordinate [2Fe-2S] cluster.

It belongs to the radical SAM superfamily. Biotin synthase family. As to quaternary structure, homodimer. The cofactor is [4Fe-4S] cluster. Requires [2Fe-2S] cluster as cofactor.

The catalysed reaction is (4R,5S)-dethiobiotin + (sulfur carrier)-SH + 2 reduced [2Fe-2S]-[ferredoxin] + 2 S-adenosyl-L-methionine = (sulfur carrier)-H + biotin + 2 5'-deoxyadenosine + 2 L-methionine + 2 oxidized [2Fe-2S]-[ferredoxin]. It participates in cofactor biosynthesis; biotin biosynthesis; biotin from 7,8-diaminononanoate: step 2/2. Its function is as follows. Catalyzes the conversion of dethiobiotin (DTB) to biotin by the insertion of a sulfur atom into dethiobiotin via a radical-based mechanism. This chain is Biotin synthase, found in Cereibacter sphaeroides (strain ATCC 17023 / DSM 158 / JCM 6121 / CCUG 31486 / LMG 2827 / NBRC 12203 / NCIMB 8253 / ATH 2.4.1.) (Rhodobacter sphaeroides).